The sequence spans 1447 residues: Netrin receptor DCC (1447 aa).

The signal sequence occupies residues 1–25 (MENSLRCVWVPKLAFVLFGASLFSA). 4 Ig-like C2-type domains span residues 26 to 135 (HLQV…AKVA), 139 to 229 (PLRF…AEVR), 234 to 326 (PGLH…AELT), and 331 to 416 (PWFL…AQLI). Topologically, residues 26-1097 (HLQVTGFQIK…GSVTPQKNSN (1072 aa)) are extracellular. Disulfide bonds link Cys-61–Cys-117, Cys-161–Cys-212, and Cys-261–Cys-310. Asn-94 is a glycosylation site (N-linked (GlcNAc...) asparagine). Residues Asn-299 and Asn-318 are each glycosylated (N-linked (GlcNAc...) asparagine). An intrachain disulfide couples Cys-352 to Cys-400. 6 Fibronectin type-III domains span residues 431–524 (APRD…TQPE), 530–620 (PVEN…TLSD), 625–718 (PPQN…TPEN), 728–821 (QPSS…TDPT), 846–942 (PPVG…TYEA), and 947–1044 (APKD…TLKV). Residue Asn-478 is glycosylated (N-linked (GlcNAc...) asparagine). Asn-628 and Asn-702 each carry an N-linked (GlcNAc...) asparagine glycan. A helical membrane pass occupies residues 1098 to 1122 (LLVIIVVTVGVITVLVVVIVAVICT). Residues 1123 to 1447 (RRSSAQQRKK…QLNAITGSAF (325 aa)) lie on the Cytoplasmic side of the membrane. Disordered regions lie at residues 1126-1152 (SAQQ…RPPD) and 1165-1222 (IEKP…TLER). The segment covering 1129–1143 (QRKKRATHSAGKRKG) has biased composition (basic residues). Phosphoserine; by MAPK1 is present on Ser-1178. Residues 1179–1221 (PIQSCQDLTPVSHSQSETQLGSKSTSHSGQDTEEAGSSMSTLE) are compositionally biased toward polar residues. Residue Thr-1187 is modified to Phosphothreonine; by MAPK1. Residue Ser-1267 is modified to Phosphoserine; by MAPK1. Disordered regions lie at residues 1288–1330 (SVDR…PSRT) and 1394–1419 (LLPV…SANV). Positions 1297–1310 (RSQSVSEGPTTQQP) are enriched in polar residues. An interaction with MYO10 region spans residues 1432 to 1439 (LEGLMKQL).

The protein belongs to the immunoglobulin superfamily. DCC family. As to quaternary structure, interacts with the cytoplasmic part of UNC5A, UNC5B, UNC5C and probably UNC5D. Interacts with DSCAM. Interacts with PTK2/FAK1 and MAPK1. Interacts with NTN1. Interacts with MYO10. Interacts with CBLN4; this interaction can be competed by NTN1. Interacts with SIAH1 and SIAH2. In terms of processing, ubiquitinated; mediated by SIAH1 or SIAH2 and leading to its subsequent proteasomal degradation. As to expression, found in axons of the central and peripheral nervous system and in differentiated cell types of the intestine. Not expressed in colorectal tumor cells that lost their capacity to differentiate into mucus producing cells.

The protein localises to the membrane. Receptor for netrin required for axon guidance. Mediates axon attraction of neuronal growth cones in the developing nervous system upon ligand binding. Its association with UNC5 proteins may trigger signaling for axon repulsion. It also acts as a dependence receptor required for apoptosis induction when not associated with netrin ligand. Implicated as a tumor suppressor gene. The chain is Netrin receptor DCC (DCC) from Homo sapiens (Human).